Consider the following 161-residue polypeptide: RNA pyrophosphohydrolase (161 aa).

Positions 12-154 constitute a Nudix hydrolase domain; that stretch reads PYRPGVGMMI…KRKLYQAVVK (143 aa). A Nudix box motif is present at residues 46 to 67; that stretch reads GGIVPGETPSIAAMREMLEEIG.

It belongs to the Nudix hydrolase family. RppH subfamily. It depends on a divalent metal cation as a cofactor.

Accelerates the degradation of transcripts by removing pyrophosphate from the 5'-end of triphosphorylated RNA, leading to a more labile monophosphorylated state that can stimulate subsequent ribonuclease cleavage. This is RNA pyrophosphohydrolase from Rickettsia peacockii (strain Rustic).